The following is a 349-amino-acid chain: Cytoplasmic tRNA 2-thiolation protein 2 (349 aa).

This sequence belongs to the CTU2/NCS2 family.

Its subcellular location is the cytoplasm. Its pathway is tRNA modification; 5-methoxycarbonylmethyl-2-thiouridine-tRNA biosynthesis. In terms of biological role, plays a central role in 2-thiolation of mcm(5)S(2)U at tRNA wobble positions of tRNA(Lys), tRNA(Glu) and tRNA(Gln). May act by forming a heterodimer with tut-1/ctu-1 that ligates sulfur from thiocarboxylated urm-1 onto the uridine of tRNAs at wobble position. The sequence is that of Cytoplasmic tRNA 2-thiolation protein 2 from Caenorhabditis briggsae.